The sequence spans 393 residues: Elongation factor Tu (393 aa).

One can recognise a tr-type G domain in the interval Lys10–Val203. Residues Gly19–Thr26 are G1. A GTP-binding site is contributed by Gly19–Thr26. Thr26 contacts Mg(2+). The G2 stretch occupies residues Gly60–Ser64. The segment at Asp81–Gly84 is G3. GTP contacts are provided by residues Asp81 to His85 and Asn136 to Asp139. Residues Asn136 to Asp139 form a G4 region. The tract at residues Ser173–Leu175 is G5.

This sequence belongs to the TRAFAC class translation factor GTPase superfamily. Classic translation factor GTPase family. EF-Tu/EF-1A subfamily. In terms of assembly, monomer.

The protein resides in the cytoplasm. It catalyses the reaction GTP + H2O = GDP + phosphate + H(+). Its function is as follows. GTP hydrolase that promotes the GTP-dependent binding of aminoacyl-tRNA to the A-site of ribosomes during protein biosynthesis. In Pelodictyon phaeoclathratiforme (strain DSM 5477 / BU-1), this protein is Elongation factor Tu.